Here is a 533-residue protein sequence, read N- to C-terminus: Na(+)/H(+) antiporter NhaB (533 aa).

10 helical membrane passes run 28–50 (FLII…VLVL), 67–87 (PGGL…SQVL), 96–116 (VLLL…LLLF), 131–165 (VSLM…FYSI), 254–274 (VPVL…GIFG), 316–336 (LIAG…SVII), 364–384 (LAVF…APVI), 396–416 (LVIF…VFVG), 454–474 (ATPN…APLI), and 481–501 (MVWM…MAIQ).

It belongs to the NhaB Na(+)/H(+) (TC 2.A.34) antiporter family.

It is found in the cell inner membrane. It catalyses the reaction 2 Na(+)(in) + 3 H(+)(out) = 2 Na(+)(out) + 3 H(+)(in). In terms of biological role, na(+)/H(+) antiporter that extrudes sodium in exchange for external protons. The chain is Na(+)/H(+) antiporter NhaB from Shewanella baltica (strain OS195).